We begin with the raw amino-acid sequence, 122 residues long: Large ribosomal subunit protein uL14 (122 aa).

It belongs to the universal ribosomal protein uL14 family. In terms of assembly, part of the 50S ribosomal subunit. Forms a cluster with proteins L3 and L19. In the 70S ribosome, L14 and L19 interact and together make contacts with the 16S rRNA in bridges B5 and B8.

In terms of biological role, binds to 23S rRNA. Forms part of two intersubunit bridges in the 70S ribosome. This Corynebacterium efficiens (strain DSM 44549 / YS-314 / AJ 12310 / JCM 11189 / NBRC 100395) protein is Large ribosomal subunit protein uL14.